The primary structure comprises 30 residues: Platelet factor 4 (30 aa).

This sequence belongs to the intercrine alpha (chemokine CxC) family. As to quaternary structure, homotetramer. Interacts with TNFAIP6 (via Link domain). Interacts with CCR1. Interacts with CXCR3. Post-translationally, binds non-covalently to a proteoglycan molecule.

Its subcellular location is the secreted. Functionally, chemokine released during platelet aggregation that plays a role in different biological processes including hematopoiesis, cell proliferation, differentiation, and activation. Acts via different functional receptors including CCR1, CXCR3A or CXCR3B. Upon interaction with CXCR3A receptor, induces activated T-lymphocytes migration mediated via downstream Ras/extracellular signal-regulated kinase (ERK) signaling. Neutralizes the anticoagulant effect of heparin by binding more strongly to heparin than to the chondroitin-4-sulfate chains of the carrier molecule. Plays a role in the inhibition of hematopoiesis and in the maintenance of hematopoietic stem cell (HSC) quiescence. Chemotactic for neutrophils and monocytes via CCR1. Inhibits endothelial cell proliferation. In cooperation with toll-like receptor 8/TLR8, induces chromatin remodeling and activates inflammatory gene expression via the TBK1-IRF5 axis. In addition, induces myofibroblast differentiation and collagen synthesis in different precursor cells, including endothelial cells, by stimulating endothelial-to-mesenchymal transition. The chain is Platelet factor 4 (PF4) from Oryctolagus cuniculus (Rabbit).